Reading from the N-terminus, the 628-residue chain is uncharacterized protein (628 aa).

This sequence belongs to the IucA/IucC family.

This is an uncharacterized protein from Sinorhizobium fredii (strain NBRC 101917 / NGR234).